The sequence spans 201 residues: 3-isopropylmalate dehydratase small subunit (201 aa).

It belongs to the LeuD family. LeuD type 1 subfamily. In terms of assembly, heterodimer of LeuC and LeuD.

It catalyses the reaction (2R,3S)-3-isopropylmalate = (2S)-2-isopropylmalate. Its pathway is amino-acid biosynthesis; L-leucine biosynthesis; L-leucine from 3-methyl-2-oxobutanoate: step 2/4. In terms of biological role, catalyzes the isomerization between 2-isopropylmalate and 3-isopropylmalate, via the formation of 2-isopropylmaleate. The polypeptide is 3-isopropylmalate dehydratase small subunit (Agrobacterium fabrum (strain C58 / ATCC 33970) (Agrobacterium tumefaciens (strain C58))).